Reading from the N-terminus, the 145-residue chain is Catabolic 3-dehydroquinase (145 aa).

The active-site Proton acceptor is Y24. Substrate is bound by residues N77, H83, and D90. Residue H103 is the Proton donor of the active site. Substrate is bound by residues 104–105 and R114; that span reads IT.

Belongs to the type-II 3-dehydroquinase family. Homododecamer. Adopts a ring-like structure, composed of an arrangement of two hexameric rings stacked on top of one another.

The enzyme catalyses 3-dehydroquinate = 3-dehydroshikimate + H2O. It functions in the pathway aromatic compound metabolism; 3,4-dihydroxybenzoate biosynthesis; 3,4-dihydroxybenzoate from 3-dehydroquinate: step 1/2. Its function is as follows. Is involved in the catabolism of quinate. Allows the utilization of quinate as carbon source via the beta-ketoadipate pathway. The chain is Catabolic 3-dehydroquinase from Clavispora lusitaniae (strain ATCC 42720) (Yeast).